A 718-amino-acid chain; its full sequence is Ribosomal RNA large subunit methyltransferase K/L (718 aa).

One can recognise a THUMP domain in the interval 43–154 (TQYRILLWSR…QDELVVSLDL (112 aa)).

This sequence belongs to the methyltransferase superfamily. RlmKL family.

It localises to the cytoplasm. It carries out the reaction guanosine(2445) in 23S rRNA + S-adenosyl-L-methionine = N(2)-methylguanosine(2445) in 23S rRNA + S-adenosyl-L-homocysteine + H(+). The enzyme catalyses guanosine(2069) in 23S rRNA + S-adenosyl-L-methionine = N(2)-methylguanosine(2069) in 23S rRNA + S-adenosyl-L-homocysteine + H(+). Its function is as follows. Specifically methylates the guanine in position 2445 (m2G2445) and the guanine in position 2069 (m7G2069) of 23S rRNA. This Histophilus somni (strain 129Pt) (Haemophilus somnus) protein is Ribosomal RNA large subunit methyltransferase K/L.